A 244-amino-acid chain; its full sequence is Transcription factor A, mitochondrial (244 aa).

Residues Met1 to Phe42 constitute a mitochondrion transit peptide. Residues Pro49–Lys117 constitute a DNA-binding region (HMG box 1). Phosphoserine; by PKA is present on residues Ser54, Ser55, and Ser60. Lys66 carries the N6-succinyllysine modification. At Thr121 the chain carries Phosphothreonine. The segment at residues Pro154–Glu218 is a DNA-binding region (HMG box 2). Phosphoserine; by PKA is present on Ser159. A Phosphoserine modification is found at Ser192. The interval Met221–Asn244 is disordered.

In terms of assembly, monomer; binds DNA as a monomer. Homodimer. Component of the mitochondrial transcription initiation complex, composed at least of TFB2M, TFAM and POLRMT. In this complex TFAM recruits POLRMT to the promoter whereas TFB2M induces structural changes in POLRMT to enable promoter opening and trapping of the DNA non-template strand. Upon metabolic stress, forms a complex composed of FOXO3, SIRT3, TFAM and POLRMT. Interacts with TFB1M and TFB2M. Interacts with CLPX; this enhances DNA-binding. In terms of processing, phosphorylation by PKA within the HMG box 1 impairs DNA binding and promotes degradation by the AAA+ Lon protease. In terms of tissue distribution, the mitochondrial isoform is widely expressed while the nuclear isoform is testis-specific.

It localises to the mitochondrion. Its subcellular location is the mitochondrion matrix. The protein localises to the mitochondrion nucleoid. It is found in the nucleus. In terms of biological role, binds to the mitochondrial light strand promoter and functions in mitochondrial transcription regulation. Component of the mitochondrial transcription initiation complex, composed at least of TFB2M, TFAM and POLRMT that is required for basal transcription of mitochondrial DNA. In this complex, TFAM recruits POLRMT to a specific promoter whereas TFB2M induces structural changes in POLRMT to enable promoter opening and trapping of the DNA non-template strand. Required for accurate and efficient promoter recognition by the mitochondrial RNA polymerase. Promotes transcription initiation from the HSP1 and the light strand promoter by binding immediately upstream of transcriptional start sites. Is able to unwind DNA. Bends the mitochondrial light strand promoter DNA into a U-turn shape via its HMG boxes. Required for maintenance of normal levels of mitochondrial DNA. May play a role in organizing and compacting mitochondrial DNA. May also function as a transcriptional activator or may have a structural role in the compaction of nuclear DNA during spermatogenesis. The sequence is that of Transcription factor A, mitochondrial from Rattus norvegicus (Rat).